Here is a 401-residue protein sequence, read N- to C-terminus: Glutamyl-tRNA reductase (401 aa).

Substrate is bound by residues 45-48 (TCNR), serine 101, 106-108 (EDQ), and glutamine 112. Cysteine 46 functions as the Nucleophile in the catalytic mechanism. 177 to 182 (GYGDVG) is a binding site for NADP(+).

Belongs to the glutamyl-tRNA reductase family. In terms of assembly, homodimer.

The catalysed reaction is (S)-4-amino-5-oxopentanoate + tRNA(Glu) + NADP(+) = L-glutamyl-tRNA(Glu) + NADPH + H(+). It participates in porphyrin-containing compound metabolism; protoporphyrin-IX biosynthesis; 5-aminolevulinate from L-glutamyl-tRNA(Glu): step 1/2. In terms of biological role, catalyzes the NADPH-dependent reduction of glutamyl-tRNA(Glu) to glutamate 1-semialdehyde (GSA). The protein is Glutamyl-tRNA reductase of Clostridium botulinum (strain Eklund 17B / Type B).